The following is a 284-amino-acid chain: uncharacterized protein (284 aa).

Residues 1–23 (MKRGCAIAVMICGLITSVSAASA) form the signal peptide.

It belongs to the surface antigen msp4 family.

This is an uncharacterized protein from Brucella suis biovar 1 (strain 1330).